We begin with the raw amino-acid sequence, 451 residues long: Tubulin alpha-3 chain (451 aa).

Gln11 is a GTP binding site. The residue at position 40 (Lys40) is an N6-acetyllysine. GTP contacts are provided by Glu71, Ser140, Gly144, Thr145, Thr179, Asn206, and Asn228. Mg(2+) is bound at residue Glu71. The active site involves Glu254.

It belongs to the tubulin family. As to quaternary structure, dimer of alpha and beta chains. A typical microtubule is a hollow water-filled tube with an outer diameter of 25 nm and an inner diameter of 15 nM. Alpha-beta heterodimers associate head-to-tail to form protofilaments running lengthwise along the microtubule wall with the beta-tubulin subunit facing the microtubule plus end conferring a structural polarity. Microtubules usually have 13 protofilaments but different protofilament numbers can be found in some organisms and specialized cells. It depends on Mg(2+) as a cofactor. In terms of processing, undergoes a tyrosination/detyrosination cycle, the cyclic removal and re-addition of a C-terminal tyrosine residue by the enzymes tubulin tyrosine carboxypeptidase (TTCP) and tubulin tyrosine ligase (TTL), respectively. Post-translationally, acetylation of alpha chains at Lys-40 stabilizes microtubules and affects affinity and processivity of microtubule motors. This modification has a role in multiple cellular functions, ranging from cell motility, cell cycle progression or cell differentiation to intracellular trafficking and signaling.

It is found in the cytoplasm. Its subcellular location is the cytoskeleton. The enzyme catalyses GTP + H2O = GDP + phosphate + H(+). Functionally, tubulin is the major constituent of microtubules, a cylinder consisting of laterally associated linear protofilaments composed of alpha- and beta-tubulin heterodimers. Microtubules grow by the addition of GTP-tubulin dimers to the microtubule end, where a stabilizing cap forms. Below the cap, tubulin dimers are in GDP-bound state, owing to GTPase activity of alpha-tubulin. The chain is Tubulin alpha-3 chain from Homarus americanus (American lobster).